Reading from the N-terminus, the 153-residue chain is Ribosomal RNA large subunit methyltransferase H (153 aa).

Residues Leu70, Gly102, and 121–126 (LSAMTF) each bind S-adenosyl-L-methionine.

The protein belongs to the RNA methyltransferase RlmH family. As to quaternary structure, homodimer.

Its subcellular location is the cytoplasm. It catalyses the reaction pseudouridine(1915) in 23S rRNA + S-adenosyl-L-methionine = N(3)-methylpseudouridine(1915) in 23S rRNA + S-adenosyl-L-homocysteine + H(+). In terms of biological role, specifically methylates the pseudouridine at position 1915 (m3Psi1915) in 23S rRNA. The sequence is that of Ribosomal RNA large subunit methyltransferase H from Trichlorobacter lovleyi (strain ATCC BAA-1151 / DSM 17278 / SZ) (Geobacter lovleyi).